Consider the following 976-residue polypeptide: Ephrin type-A receptor 2 (976 aa).

A signal peptide spans Met-1–Ala-23. Residues Met-1 to Gln-206 are mediates interaction with CLDN4. Residues Gln-25–Val-537 are Extracellular-facing. Positions Glu-28–Gln-206 constitute an Eph LBD domain. 2 disulfide bridges follow: Cys-70–Cys-188 and Cys-105–Cys-115. A Fibronectin type-III 1 domain is found at Pro-328–Val-432. N-linked (GlcNAc...) asparagine glycosylation is found at Asn-407 and Asn-435. One can recognise a Fibronectin type-III 2 domain in the interval Glu-438 to Pro-529. The chain crosses the membrane as a helical span at residues Ile-538–Ile-558. Topologically, residues His-559–Ile-976 are cytoplasmic. The residue at position 570 (Ser-570) is a Phosphoserine. Tyr-575 carries the post-translational modification Phosphotyrosine. Residue Ser-579 is modified to Phosphoserine. Position 588 is a phosphotyrosine; by autocatalysis (Tyr-588). At Tyr-594 the chain carries Phosphotyrosine. Positions Thr-606–Phe-906 are mediates interaction with ARHGEF16. In terms of domain architecture, Protein kinase spans Val-613–Ile-875. Ile-619–Val-627 contacts ATP. Position 628 is a phosphotyrosine (Tyr-628). Lys-646 provides a ligand contact to ATP. Phosphothreonine is present on Thr-647. Tyr-735 carries the phosphotyrosine; by autocatalysis modification. Asp-739 functions as the Proton acceptor in the catalytic mechanism. Tyr-772 is subject to Phosphotyrosine. Ser-869, Ser-892, Ser-897, and Ser-901 each carry phosphoserine. Residues Asp-886–Ile-976 are negatively regulates interaction with ARHGEF16. Residues Val-904–Gln-968 enclose the SAM domain. The residue at position 921 (Tyr-921) is a Phosphotyrosine; by autocatalysis. A Phosphotyrosine modification is found at Tyr-930. Residues Ile-974–Ile-976 carry the PDZ-binding motif.

It belongs to the protein kinase superfamily. Tyr protein kinase family. Ephrin receptor subfamily. As to quaternary structure, homodimer. Interacts with SLA. Interacts (phosphorylated form) with VAV2, VAV3 and PI3-kinase p85 subunit (PIK3R1, PIK3R2 or PIK3R3); critical for the EFNA1-induced activation of RAC1 which stimulates cell migration. Interacts with INPPL1; regulates activated EPHA2 endocytosis and degradation. Interacts (inactivated form) with PTK2/FAK1 and interacts (EFNA1 ligand-activated form) with PTPN11; regulates integrin-mediated adhesion. Interacts with ARHGEF16, DOCK4 and ELMO2; mediates ligand-independent activation of RAC1 which stimulates cell migration. Interacts with CLDN4; phosphorylates CLDN4 and may regulate tight junctions. Interacts with ACP1. Interacts with ANKS1A. Interacts with CEMIP. Interacts with NCK1; may regulate EPHA2 activity in cell migration and adhesion. Interacts with TIMD4. In terms of processing, autophosphorylates. Phosphorylated on tyrosine upon binding and activation by EFNA1. Phosphorylated residues Tyr-588 and Tyr-594 are required for binding VAV2 and VAV3 while phosphorylated residues Tyr-735 and Tyr-930 are required for binding PI3-kinase p85 subunit (PIK3R1, PIK3R2 or PIK3R3). These phosphorylated residues are critical for recruitment of VAV2 and VAV3 and PI3-kinase p85 subunit which transduce downstream signaling to activate RAC1 GTPase and cell migration. Dephosphorylation of Tyr-930 by PTPRF prevents the interaction of EPHA2 with NCK1. Phosphorylated at Ser-897 by PKB; serum-induced phosphorylation which targets EPHA2 to the cell leading edge and stimulates cell migration. Phosphorylation by PKB is inhibited by EFNA1-activated EPHA2 which regulates PKB activity via a reciprocal regulatory loop. Phosphorylated at Ser-897 in response to TNF by RPS6KA1 and RPS6KA3; RPS6KA-EPHA2 signaling pathway controls cell migration. Phosphorylated at Ser-897 by PKA; blocks cell retraction induced by EPHA2 kinase activity. Dephosphorylated by ACP1. Ubiquitinated by CHIP/STUB1. Ubiquitination is regulated by the HSP90 chaperone and regulates the receptor stability and activity through proteasomal degradation. ANKS1A prevents ubiquitination and degradation.

It is found in the cell membrane. The protein resides in the cell projection. The protein localises to the ruffle membrane. It localises to the lamellipodium membrane. Its subcellular location is the cell junction. It is found in the focal adhesion. It catalyses the reaction L-tyrosyl-[protein] + ATP = O-phospho-L-tyrosyl-[protein] + ADP + H(+). Functionally, receptor tyrosine kinase which binds promiscuously membrane-bound ephrin-A family ligands residing on adjacent cells, leading to contact-dependent bidirectional signaling into neighboring cells. The signaling pathway downstream of the receptor is referred to as forward signaling while the signaling pathway downstream of the ephrin ligand is referred to as reverse signaling. Activated by the ligand ephrin-A1/EFNA1 regulates migration, integrin-mediated adhesion, proliferation and differentiation of cells. Regulates cell adhesion and differentiation through DSG1/desmoglein-1 and inhibition of the ERK1/ERK2 signaling pathway. May also participate in UV radiation-induced apoptosis and have a ligand-independent stimulatory effect on chemotactic cell migration. During development, may function in distinctive aspects of pattern formation and subsequently in development of several fetal tissues. Involved for instance in angiogenesis, in early hindbrain development and epithelial proliferation and branching morphogenesis during mammary gland development. Engaged by the ligand ephrin-A5/EFNA5 may regulate lens fiber cells shape and interactions and be important for lens transparency development and maintenance. With ephrin-A2/EFNA2 may play a role in bone remodeling through regulation of osteoclastogenesis and osteoblastogenesis. This chain is Ephrin type-A receptor 2 (EPHA2), found in Macaca fascicularis (Crab-eating macaque).